The primary structure comprises 537 residues: NEDD4-binding protein 3 (537 aa).

Position 172 is a phosphoserine (serine 172). 3 disordered regions span residues 173 to 234 (LDEG…VLSC), 328 to 361 (KELR…EARW), and 423 to 458 (QEQA…REGA). Positions 178–207 (PEPSLSDSSSGGSFGRSPGTGPSPFSSSLG) are enriched in low complexity. Positions 295-501 (VERLHEVAQK…RVLRYQREIQ (207 aa)) form a coiled coil. Positions 351-361 (PNARPEEEARW) are enriched in basic and acidic residues.

It belongs to the N4BP3 family. In terms of assembly, binds NEDD4. Interacts with 14-3-3 proteins. Interacts with MAVS.

Its subcellular location is the cytoplasmic vesicle. It is found in the cell projection. The protein localises to the axon. The protein resides in the dendrite. In terms of biological role, plays a positive role in the antiviral innate immune signaling pathway. Mechanistically, interacts with MAVS and functions as a positive regulator to promote 'Lys-63'-linked polyubiquitination of MAVS and thus strengthens the interaction between MAVS and TRAF2. Also plays a role in axon and dendrite arborization during cranial nerve development. May also be important for neural crest migration and early development of other anterior structures including eye, brain and cranial cartilage. This chain is NEDD4-binding protein 3 (N4bp3), found in Mus musculus (Mouse).